Here is a 337-residue protein sequence, read N- to C-terminus: Cytoskeleton protein RodZ (337 aa).

Residues 1 to 111 (MNTEATHDQN…LGKRRKKRDG (111 aa)) lie on the Cytoplasmic side of the membrane. The 53-residue stretch at 19-71 (LRNAREQLGLSQQAVAERLCLKVSTVRDIEEDKAPADLASTFLRGYIRSYARL) folds into the HTH cro/C1-type domain. Residues 30–49 (QQAVAERLCLKVSTVRDIEE) constitute a DNA-binding region (H-T-H motif). The helical; Signal-anchor for type II membrane protein transmembrane segment at 112-132 (WLMTFTWLVLFVVIGLSGAWW) threads the bilayer. Residues 133–337 (WQDHKAQQEE…TLNAEQSPAQ (205 aa)) are Periplasmic-facing. The segment covering 145–167 (TMADQSSAELSSNSEQGQSVPLN) has biased composition (polar residues). The segment at 145 to 236 (TMADQSSAEL…TAATTPDGAA (92 aa)) is disordered. A compositionally biased stretch (low complexity) spans 168–207 (TSTTTDPATTSTPPASVDTTATNTQTPVVTAPAPAVDPQQ). A compositionally biased stretch (polar residues) spans 208 to 218 (NAVVSPSQANV). The span at 219 to 236 (DTAATPAPTAATTPDGAA) shows a compositional bias: low complexity.

It belongs to the RodZ family.

It localises to the cell inner membrane. Functionally, cytoskeletal protein that is involved in cell-shape control through regulation of the length of the long axis. The sequence is that of Cytoskeleton protein RodZ from Escherichia coli O157:H7.